Consider the following 113-residue polypeptide: UPF0145 protein MTH_544 (113 aa).

This sequence belongs to the UPF0145 family.

In Methanothermobacter thermautotrophicus (strain ATCC 29096 / DSM 1053 / JCM 10044 / NBRC 100330 / Delta H) (Methanobacterium thermoautotrophicum), this protein is UPF0145 protein MTH_544.